Consider the following 416-residue polypeptide: MLRVMTSRNFLTIDDFDIRGKTILLRVDMNSPMDTQGHILDDMRIRSHIATLKDLESAKVVVLAHQSRPGKKDFTTMKPHAHLLSRYLGRQVTYVDDIFGTFAKTQIASMEDGDVIMLENVRFYSEESLERTTAEQANTFMVKKLAPFVDIFLNDAFAVSHRSHLSVVGFTEVLPSGAGRVMEKELISLEKGVKSGERPSVFVLGGAKVDDSLRVTENVLTNGGADRVLLTGVVANVALAASGVNIGKANLDFIKSQGYEDQIERARGLLAKFEDKIGLPKDVALNDNKKRVEAPISELNSDSLPINDIGLETIVDYTNEIQNAKTVVLNGPAGVSEIEDFALGTHEIIKAAIKSDFSIIGGGHISVEVAHLGLEHRFSHISTGGGACIDFLAGEKLPGVEALKAAYNKYQEAKKL.

Residues 28-30 (DMN), Arg44, 65-68 (HQSR), Arg122, and Arg162 each bind substrate. ATP contacts are provided by residues Glu337 and 362-365 (GGHI).

It belongs to the phosphoglycerate kinase family. In terms of assembly, monomer.

Its subcellular location is the cytoplasm. It carries out the reaction (2R)-3-phosphoglycerate + ATP = (2R)-3-phospho-glyceroyl phosphate + ADP. It functions in the pathway carbohydrate degradation; glycolysis; pyruvate from D-glyceraldehyde 3-phosphate: step 2/5. This Methanosarcina mazei (strain ATCC BAA-159 / DSM 3647 / Goe1 / Go1 / JCM 11833 / OCM 88) (Methanosarcina frisia) protein is Phosphoglycerate kinase.